A 358-amino-acid polypeptide reads, in one-letter code: Phospho-N-acetylmuramoyl-pentapeptide-transferase (358 aa).

The next 10 helical transmembrane spans lie at 26–46 (AIYA…WLID), 70–90 (GTPT…TLLW), 94–114 (TNVY…VGFV), 134–154 (MLWL…YPPF), 169–189 (ELGL…SNAV), 197–217 (GLAI…AYLA), 234–254 (AGEL…FLWF), 261–281 (VFMG…IAVI), 286–306 (IVLV…IVQV), and 335–355 (KIIV…LSTL).

Belongs to the glycosyltransferase 4 family. MraY subfamily. Requires Mg(2+) as cofactor.

The protein resides in the cell inner membrane. The catalysed reaction is UDP-N-acetyl-alpha-D-muramoyl-L-alanyl-gamma-D-glutamyl-meso-2,6-diaminopimeloyl-D-alanyl-D-alanine + di-trans,octa-cis-undecaprenyl phosphate = di-trans,octa-cis-undecaprenyl diphospho-N-acetyl-alpha-D-muramoyl-L-alanyl-D-glutamyl-meso-2,6-diaminopimeloyl-D-alanyl-D-alanine + UMP. The protein operates within cell wall biogenesis; peptidoglycan biosynthesis. Its function is as follows. Catalyzes the initial step of the lipid cycle reactions in the biosynthesis of the cell wall peptidoglycan: transfers peptidoglycan precursor phospho-MurNAc-pentapeptide from UDP-MurNAc-pentapeptide onto the lipid carrier undecaprenyl phosphate, yielding undecaprenyl-pyrophosphoryl-MurNAc-pentapeptide, known as lipid I. This chain is Phospho-N-acetylmuramoyl-pentapeptide-transferase, found in Syntrophotalea carbinolica (strain DSM 2380 / NBRC 103641 / GraBd1) (Pelobacter carbinolicus).